The sequence spans 336 residues: Acetyl-coenzyme A carboxylase carboxyl transferase subunit alpha (336 aa).

The 261-residue stretch at 48 to 308 (ALEAKVESLR…KSMLIEELQG (261 aa)) folds into the CoA carboxyltransferase C-terminal domain.

The protein belongs to the AccA family. In terms of assembly, acetyl-CoA carboxylase is a heterohexamer composed of biotin carboxyl carrier protein (AccB), biotin carboxylase (AccC) and two subunits each of ACCase subunit alpha (AccA) and ACCase subunit beta (AccD).

Its subcellular location is the cytoplasm. The catalysed reaction is N(6)-carboxybiotinyl-L-lysyl-[protein] + acetyl-CoA = N(6)-biotinyl-L-lysyl-[protein] + malonyl-CoA. The protein operates within lipid metabolism; malonyl-CoA biosynthesis; malonyl-CoA from acetyl-CoA: step 1/1. In terms of biological role, component of the acetyl coenzyme A carboxylase (ACC) complex. First, biotin carboxylase catalyzes the carboxylation of biotin on its carrier protein (BCCP) and then the CO(2) group is transferred by the carboxyltransferase to acetyl-CoA to form malonyl-CoA. The chain is Acetyl-coenzyme A carboxylase carboxyl transferase subunit alpha from Chlorobaculum parvum (strain DSM 263 / NCIMB 8327) (Chlorobium vibrioforme subsp. thiosulfatophilum).